The following is a 949-amino-acid chain: General transcription factor II-I repeat domain-containing protein 2B (949 aa).

2 GTF2I-like repeats span residues glutamine 98–glycine 192 and leucine 323–glycine 417.

The protein belongs to the TFII-I family. Ubiquitous.

It is found in the nucleus. This chain is General transcription factor II-I repeat domain-containing protein 2B (GTF2IRD2B), found in Homo sapiens (Human).